A 211-amino-acid chain; its full sequence is Methylthioribulose-1-phosphate dehydratase (211 aa).

Zn(2+) contacts are provided by His94 and His96.

This sequence belongs to the aldolase class II family. MtnB subfamily. It depends on Zn(2+) as a cofactor.

The catalysed reaction is 5-(methylsulfanyl)-D-ribulose 1-phosphate = 5-methylsulfanyl-2,3-dioxopentyl phosphate + H2O. It functions in the pathway amino-acid biosynthesis; L-methionine biosynthesis via salvage pathway; L-methionine from S-methyl-5-thio-alpha-D-ribose 1-phosphate: step 2/6. Catalyzes the dehydration of methylthioribulose-1-phosphate (MTRu-1-P) into 2,3-diketo-5-methylthiopentyl-1-phosphate (DK-MTP-1-P). This Pseudoalteromonas translucida (strain TAC 125) protein is Methylthioribulose-1-phosphate dehydratase.